Here is a 267-residue protein sequence, read N- to C-terminus: Diphthine synthase (267 aa).

S-adenosyl-L-methionine contacts are provided by residues Leu-9, Asp-87, Ile-90, 115-116 (SI), Leu-166, Leu-205, and His-230.

This sequence belongs to the diphthine synthase family. As to quaternary structure, homodimer.

It catalyses the reaction 2-[(3S)-amino-3-carboxypropyl]-L-histidyl-[translation elongation factor 2] + 3 S-adenosyl-L-methionine = diphthine-[translation elongation factor 2] + 3 S-adenosyl-L-homocysteine + 3 H(+). Its pathway is protein modification; peptidyl-diphthamide biosynthesis. In terms of biological role, S-adenosyl-L-methionine-dependent methyltransferase that catalyzes the trimethylation of the amino group of the modified target histidine residue in translation elongation factor 2 (EF-2), to form an intermediate called diphthine. The three successive methylation reactions represent the second step of diphthamide biosynthesis. The chain is Diphthine synthase from Staphylothermus marinus (strain ATCC 43588 / DSM 3639 / JCM 9404 / F1).